A 35-amino-acid polypeptide reads, in one-letter code: MSDIN-like toxin proprotein 6 (35 aa).

A propeptide spanning residues 1–10 is cleaved from the precursor; it reads MSDINTTRLP. The segment at residues 11–18 is a cross-link (cyclopeptide (Phe-Pro)); it reads FVFVASPP. Residues 19–35 constitute a propeptide that is removed on maturation; that stretch reads CVGDDIAMVLTRGENLC.

Belongs to the MSDIN fungal toxin family. Post-translationally, processed by the macrocyclase-peptidase enzyme POPB to yield a toxic cyclic octapeptide. POPB first removes 10 residues from the N-terminus. Conformational trapping of the remaining peptide forces the enzyme to release this intermediate rather than proceed to macrocyclization. The enzyme rebinds the remaining peptide in a different conformation and catalyzes macrocyclization of the N-terminal 8 residues. In terms of tissue distribution, expressed in basidiocarps.

Probable toxin that belongs to the MSDIN-like toxin family responsible for a large number of food poisoning cases and deaths. The sequence is that of MSDIN-like toxin proprotein 6 from Amanita exitialis (Guangzhou destroying angel).